The following is a 315-amino-acid chain: DNA-directed RNA polymerase subunit alpha (315 aa).

The tract at residues 1–227 (MTQFQIECVE…NLFNPFKKIN (227 aa)) is alpha N-terminal domain (alpha-NTD). The alpha C-terminal domain (alpha-CTD) stretch occupies residues 239-315 (EDKISQIPIE…PKRKTNKKEN (77 aa)).

This sequence belongs to the RNA polymerase alpha chain family. In terms of assembly, in plastids the minimal PEP RNA polymerase catalytic core is composed of four subunits: alpha, beta, beta', and beta''. When a (nuclear-encoded) sigma factor is associated with the core the holoenzyme is formed, which can initiate transcription.

The protein localises to the plastid. The protein resides in the cyanelle. The catalysed reaction is RNA(n) + a ribonucleoside 5'-triphosphate = RNA(n+1) + diphosphate. Its function is as follows. DNA-dependent RNA polymerase catalyzes the transcription of DNA into RNA using the four ribonucleoside triphosphates as substrates. In Cyanophora paradoxa, this protein is DNA-directed RNA polymerase subunit alpha.